We begin with the raw amino-acid sequence, 1486 residues long: Chromosome partition protein MukB (1486 aa).

Residue 34–41 coordinates ATP; sequence GGNGAGKS. 3 coiled-coil regions span residues 326–418, 444–480, and 509–603; these read LEAD…QYNQ, LETF…QAYQ, and RHLA…RAPV. Positions 666 to 783 are flexible hinge; it reads PGGSEDQRLN…EVPLFGRAAR (118 aa). Coiled-coil stretches lie at residues 835–923, 977–1115, and 1209–1266; these read EAEI…AKLE, EMLS…TAKA, and VEAI…QNVS.

This sequence belongs to the SMC family. MukB subfamily. In terms of assembly, homodimerization via its hinge domain. Binds to DNA via its C-terminal region. Interacts, and probably forms a ternary complex, with MukE and MukF via its C-terminal region. The complex formation is stimulated by calcium or magnesium. Interacts with tubulin-related protein FtsZ.

Its subcellular location is the cytoplasm. The protein localises to the nucleoid. Functionally, plays a central role in chromosome condensation, segregation and cell cycle progression. Functions as a homodimer, which is essential for chromosome partition. Involved in negative DNA supercoiling in vivo, and by this means organize and compact chromosomes. May achieve or facilitate chromosome segregation by condensation DNA from both sides of a centrally located replisome during cell division. The protein is Chromosome partition protein MukB of Shigella boydii serotype 4 (strain Sb227).